A 205-amino-acid chain; its full sequence is 2-dehydro-3-deoxy-6-phosphogalactonate aldolase (205 aa).

Arginine 14 lines the 2-dehydro-3-deoxy-6-phospho-D-galactonate pocket. Glutamate 37 functions as the Proton donor/acceptor in the catalytic mechanism. Threonine 66, lysine 126, glycine 156, glycine 176, and serine 177 together coordinate 2-dehydro-3-deoxy-6-phospho-D-galactonate. The Schiff-base intermediate with substrate role is filled by lysine 126.

The protein belongs to the KHG/KDPG aldolase family. As to quaternary structure, homotrimer.

It carries out the reaction 2-dehydro-3-deoxy-6-phospho-D-galactonate = D-glyceraldehyde 3-phosphate + pyruvate. Its pathway is carbohydrate acid metabolism; D-galactonate degradation; D-glyceraldehyde 3-phosphate and pyruvate from D-galactonate: step 3/3. Functionally, involved in the degradation of galactose via the DeLey-Doudoroff pathway. Catalyzes the reversible, stereospecific retro-aldol cleavage of 2-keto-3-deoxy-6-phosphogalactonate (KDPGal) to pyruvate and D-glyceraldehyde-3-phosphate. In the synthetic direction, it catalyzes the addition of pyruvate to electrophilic aldehydes with re-facial selectivity. It can use a limited number of aldehyde substrates, including D-glyceraldehyde-3-phosphate (natural substrate), D-glyceraldehyde, glycolaldehyde, 2-pyridinecarboxaldehyde, D-ribose, D-erythrose and D-threose. It efficiently catalyzes aldol addition only using pyruvate as the nucleophilic component and accepts both stereochemical configurations at C2 of the electrophile. This Escherichia coli (strain K12) protein is 2-dehydro-3-deoxy-6-phosphogalactonate aldolase (dgoA).